The following is a 287-amino-acid chain: 2-dehydro-3-deoxyphosphooctonate aldolase (287 aa).

The protein belongs to the KdsA family.

It is found in the cytoplasm. The enzyme catalyses D-arabinose 5-phosphate + phosphoenolpyruvate + H2O = 3-deoxy-alpha-D-manno-2-octulosonate-8-phosphate + phosphate. It functions in the pathway carbohydrate biosynthesis; 3-deoxy-D-manno-octulosonate biosynthesis; 3-deoxy-D-manno-octulosonate from D-ribulose 5-phosphate: step 2/3. It participates in bacterial outer membrane biogenesis; lipopolysaccharide biosynthesis. The protein is 2-dehydro-3-deoxyphosphooctonate aldolase of Leptospira interrogans serogroup Icterohaemorrhagiae serovar copenhageni (strain Fiocruz L1-130).